The chain runs to 91 residues: MFLFTNGKVLWGAVIAAFILSIVFYPFLPTQMPIHYDVANSPDLTVNKLAGTVMLPVLMVVFAWARKINWQFVFAVYILLICHIVVLCLAL.

A run of 3 helical transmembrane segments spans residues 9–29, 44–64, and 71–91; these read VLWG…PFLP, LTVN…VFAW, and QFVF…CLAL.

Its subcellular location is the cell membrane. This is an uncharacterized protein from Bacillus subtilis (strain 168).